Reading from the N-terminus, the 456-residue chain is Signal recognition particle 54 kDa protein (456 aa).

Residues 104–111 (GLYGNGKT), 184–188 (DTSGR), and 242–245 (TKMD) each bind GTP.

The protein belongs to the GTP-binding SRP family. SRP54 subfamily. In terms of assembly, part of the signal recognition particle protein translocation system, which is composed of SRP and FtsY. Archaeal SRP consists of a 7S RNA molecule of 300 nucleotides and two protein subunits: SRP54 and SRP19.

It is found in the cytoplasm. It carries out the reaction GTP + H2O = GDP + phosphate + H(+). In terms of biological role, involved in targeting and insertion of nascent membrane proteins into the cytoplasmic membrane. Binds to the hydrophobic signal sequence of the ribosome-nascent chain (RNC) as it emerges from the ribosomes. The SRP-RNC complex is then targeted to the cytoplasmic membrane where it interacts with the SRP receptor FtsY. In Thermoplasma acidophilum (strain ATCC 25905 / DSM 1728 / JCM 9062 / NBRC 15155 / AMRC-C165), this protein is Signal recognition particle 54 kDa protein.